We begin with the raw amino-acid sequence, 571 residues long: NADH-quinone oxidoreductase subunit C/D (571 aa).

Residues 1-171 are NADH dehydrogenase I subunit C; that stretch reads MQASEKTLNE…NLSNTMNYRR (171 aa). The NADH dehydrogenase I subunit D stretch occupies residues 194–571; the sequence is AQVVLNWGPL…LDPVVGEVDR (378 aa).

In the N-terminal section; belongs to the complex I 30 kDa subunit family. It in the C-terminal section; belongs to the complex I 49 kDa subunit family. In terms of assembly, NDH-1 is composed of 13 different subunits. Subunits NuoB, CD, E, F, and G constitute the peripheral sector of the complex.

It is found in the cell inner membrane. The catalysed reaction is a quinone + NADH + 5 H(+)(in) = a quinol + NAD(+) + 4 H(+)(out). In terms of biological role, NDH-1 shuttles electrons from NADH, via FMN and iron-sulfur (Fe-S) centers, to quinones in the respiratory chain. The immediate electron acceptor for the enzyme in this species is believed to be ubiquinone. Couples the redox reaction to proton translocation (for every two electrons transferred, four hydrogen ions are translocated across the cytoplasmic membrane), and thus conserves the redox energy in a proton gradient. The polypeptide is NADH-quinone oxidoreductase subunit C/D (nuoC) (Hydrogenobaculum sp. (strain Y04AAS1)).